The following is a 659-amino-acid chain: 1,4-alpha-glucan branching enzyme GlgB 2 (659 aa).

The segment at 1-26 (MRNYKELKHEKNGNVTEKIGENKGKS) is disordered. Asp337 acts as the Nucleophile in catalysis. The active-site Proton donor is the Glu390.

It belongs to the glycosyl hydrolase 13 family. GlgB subfamily. In terms of assembly, monomer.

It catalyses the reaction Transfers a segment of a (1-&gt;4)-alpha-D-glucan chain to a primary hydroxy group in a similar glucan chain.. It functions in the pathway glycan biosynthesis; glycogen biosynthesis. Functionally, catalyzes the formation of the alpha-1,6-glucosidic linkages in glycogen by scission of a 1,4-alpha-linked oligosaccharide from growing alpha-1,4-glucan chains and the subsequent attachment of the oligosaccharide to the alpha-1,6 position. The protein is 1,4-alpha-glucan branching enzyme GlgB 2 of Clostridium perfringens (strain SM101 / Type A).